A 274-amino-acid chain; its full sequence is Probable lipoprotein peptidase YaeF (274 aa).

A signal peptide spans 1–20; sequence MDKPKAYCRLFLPSFLLLSA. Cys21 is lipidated: N-palmitoyl cysteine. The S-diacylglycerol cysteine moiety is linked to residue Cys21. Cys207 acts as the Nucleophile in catalysis. The Proton acceptor role is filled by His257.

The protein resides in the cell inner membrane. This Escherichia coli (strain K12) protein is Probable lipoprotein peptidase YaeF (yaeF).